Consider the following 476-residue polypeptide: Alkaline phosphatase H (476 aa).

The signal sequence occupies residues 1–26; sequence MTPGYPLALSLAVSMAVLGSALPAQA. Aspartate 77 is a binding site for Mg(2+). A Zn(2+)-binding site is contributed by aspartate 77. Catalysis depends on serine 128, which acts as the Phosphoserine intermediate. The residue at position 128 (serine 128) is a Phosphoserine. Residues aspartate 179 and threonine 181 each coordinate Mg(2+). At serine 206 the chain carries Phosphoserine. Position 346 (glutamine 346) interacts with Mg(2+). Zn(2+)-binding residues include aspartate 353, histidine 357, aspartate 395, histidine 396, and histidine 438.

Belongs to the alkaline phosphatase family. It depends on Mg(2+) as a cofactor. Zn(2+) is required as a cofactor.

It localises to the secreted. The protein localises to the periplasm. It carries out the reaction a phosphate monoester + H2O = an alcohol + phosphate. Has only phosphomonoesterase activity. This Pseudomonas aeruginosa (strain UCBPP-PA14) protein is Alkaline phosphatase H (phoA).